We begin with the raw amino-acid sequence, 508 residues long: tRNA(Ile2) 2-agmatinylcytidine synthetase TiaS (508 aa).

Residues 367-427 (ITGGHVLIEL…YQLNIEKINV (61 aa)) constitute a DNA-binding region (OB).

Belongs to the TiaS family.

Its subcellular location is the cytoplasm. It carries out the reaction cytidine(34) in tRNA(Ile2) + agmatine + ATP + H2O = 2-agmatinylcytidine(34) in tRNA(Ile2) + AMP + 2 phosphate + 2 H(+). ATP-dependent agmatine transferase that catalyzes the formation of 2-agmatinylcytidine (agm2C) at the wobble position (C34) of tRNA(Ile2), converting the codon specificity from AUG to AUA. The protein is tRNA(Ile2) 2-agmatinylcytidine synthetase TiaS of Methanococcus voltae (strain ATCC BAA-1334 / A3).